Here is a 440-residue protein sequence, read N- to C-terminus: Phosphoglycerate kinase, glycosomal (440 aa).

(2R)-3-phosphoglycerate contacts are provided by Val-23, Asp-24, Phe-25, Asn-26, Arg-39, Ser-61, His-62, Gly-64, Arg-65, Arg-135, His-171, and Arg-172. Position 217 (Gly-217) interacts with CDP. Ala-218 is a binding site for ADP. Positions 218 and 219 each coordinate AMP. Ala-218 contributes to the ATP binding site. Ala-218 provides a ligand contact to Mg(2+). Lys-219 lines the (2R)-3-phosphoglycerate pocket. Asp-222 contacts CDP. Asp-222 contacts Mg(2+). Residues Lys-223 and Gly-241 each contribute to the ADP site. Lys-223 contacts AMP. CDP is bound at residue Gly-241. Ala-242 and Ala-314 together coordinate AMP. ATP is bound by residues Ala-242 and Ala-314. ADP-binding residues include Ala-314 and Asn-338. Residues Gly-339 and Phe-344 each coordinate CDP. ADP is bound by residues Phe-344, Glu-345, Asp-377, and Ser-378. Residue Glu-345 participates in AMP binding. ATP-binding residues include Asp-377 and Ser-378. Asp-377 contributes to the Mg(2+) binding site.

This sequence belongs to the phosphoglycerate kinase family. In terms of assembly, monomer. Mg(2+) serves as cofactor.

Its subcellular location is the glycosome. It carries out the reaction (2R)-3-phosphoglycerate + ATP = (2R)-3-phospho-glyceroyl phosphate + ADP. The protein operates within carbohydrate degradation; glycolysis; pyruvate from D-glyceraldehyde 3-phosphate: step 2/5. This Trypanosoma brucei brucei protein is Phosphoglycerate kinase, glycosomal.